A 98-amino-acid chain; its full sequence is NADH-ubiquinone oxidoreductase chain 4L (98 aa).

3 helical membrane passes run 1 to 21 (MSMV…GLLI), 29 to 49 (SLLC…VTIL), and 61 to 81 (IILL…LVMV).

The protein belongs to the complex I subunit 4L family. As to quaternary structure, core subunit of respiratory chain NADH dehydrogenase (Complex I) which is composed of 45 different subunits.

Its subcellular location is the mitochondrion inner membrane. It catalyses the reaction a ubiquinone + NADH + 5 H(+)(in) = a ubiquinol + NAD(+) + 4 H(+)(out). In terms of biological role, core subunit of the mitochondrial membrane respiratory chain NADH dehydrogenase (Complex I) which catalyzes electron transfer from NADH through the respiratory chain, using ubiquinone as an electron acceptor. Part of the enzyme membrane arm which is embedded in the lipid bilayer and involved in proton translocation. This Taxidea taxus (American badger) protein is NADH-ubiquinone oxidoreductase chain 4L (MT-ND4L).